Here is a 251-residue protein sequence, read N- to C-terminus: Probable inactive cytidine deaminase 4 (251 aa).

Asn-61–Glu-63 lines the substrate pocket. Catalysis depends on Glu-76, which acts as the Proton donor. The CMP/dCMP-type deaminase domain maps to Glu-136 to Asn-251.

It belongs to the cytidine and deoxycytidylate deaminase family. Homodimer.

The sequence is that of Probable inactive cytidine deaminase 4 (CDA4) from Arabidopsis thaliana (Mouse-ear cress).